A 603-amino-acid chain; its full sequence is Probable potassium transport system protein Kup (603 aa).

12 consecutive transmembrane segments (helical) span residues 15–35 (GLVF…IFLL), 43–63 (IIGV…VEYA), 94–114 (VAFV…DGVI), 135–155 (NIGQ…LFSV), 163–183 (ITWV…FSGI), 209–229 (GIIG…GEAL), 244–264 (AWRF…AFLI), 283–303 (ILYI…SQAM), 336–356 (IYIS…MLIF), 365–385 (AYGL…TSIF), 390–410 (NITK…FLLS), and 415–435 (IPHG…LILI).

It belongs to the HAK/KUP transporter (TC 2.A.72) family.

The protein resides in the cell membrane. The catalysed reaction is K(+)(in) + H(+)(in) = K(+)(out) + H(+)(out). Its function is as follows. Transport of potassium into the cell. Likely operates as a K(+):H(+) symporter. This Methanosarcina barkeri (strain Fusaro / DSM 804) protein is Probable potassium transport system protein Kup.